Here is a 272-residue protein sequence, read N- to C-terminus: Auxin-responsive protein IAA5 (272 aa).

Positions 1 to 92 (MSPPLEPHDY…DSSPRHGASS (92 aa)) are disordered. 2 stretches are compositionally biased toward low complexity: residues 14 to 33 (SAAAASPTPSSSSCSSSPNP) and 40 to 50 (PRLTLRLGLPG). The short motif at 44-48 (LRLGL) is the EAR-like (transcriptional repression) element. Residues 152–256 (PLYVKVSMDG…RKLKIMRGSD (105 aa)) enclose the PB1 domain.

The protein belongs to the Aux/IAA family. In terms of assembly, homodimers and heterodimers. Highly expressed in roots and flowers. Expressed in shoots.

The protein resides in the nucleus. In terms of biological role, aux/IAA proteins are short-lived transcriptional factors that function as repressors of early auxin response genes at low auxin concentrations. This chain is Auxin-responsive protein IAA5 (IAA5), found in Oryza sativa subsp. indica (Rice).